A 512-amino-acid polypeptide reads, in one-letter code: Kynurenine 3-monooxygenase (512 aa).

It belongs to the aromatic-ring hydroxylase family. KMO subfamily. FAD is required as a cofactor.

Its subcellular location is the mitochondrion outer membrane. The catalysed reaction is L-kynurenine + NADPH + O2 + H(+) = 3-hydroxy-L-kynurenine + NADP(+) + H2O. Its pathway is cofactor biosynthesis; NAD(+) biosynthesis; quinolinate from L-kynurenine: step 1/3. Functionally, catalyzes the hydroxylation of L-kynurenine (L-Kyn) to form 3-hydroxy-L-kynurenine (L-3OHKyn). Required for synthesis of quinolinic acid. The chain is Kynurenine 3-monooxygenase (bna4) from Aspergillus clavatus (strain ATCC 1007 / CBS 513.65 / DSM 816 / NCTC 3887 / NRRL 1 / QM 1276 / 107).